Consider the following 157-residue polypeptide: Protein Smg homolog (157 aa).

The protein belongs to the Smg family.

The protein is Protein Smg homolog of Stenotrophomonas maltophilia (strain R551-3).